The sequence spans 1261 residues: Pentatricopeptide repeat-containing protein 5, mitochondrial (1261 aa).

PPR repeat units lie at residues 365–404, 405–442, 443–479, 480–514, 550–584, 806–849, 852–886, 887–924, 925–959, 960–995, 996–1031, 1032–1068, 1109–1143, 1144–1179, and 1180–1214; these read HPDLLPALIRALGRAKRLNSCFQLLERYNLSDPTSDTSMT, NVRSWEGLMEAYFDTDHHVEASALMKSFFRKADSNQVI, PSSILDCFLRRLAQLGHYKESAEWLGMAIEKISTYKA, SPSTLSSILEAACLNNNDKFAIAFVRKYTLSRFSD, TNFTFSNVYKAFIENGKIDVALRLLRKHIDPKVSL, HPEV…EKAN, MALILDAMILSSSFARQFKSSNLFCDNMKMLGYIP, RASTFAHLINNSTRRGDTDDATTALNIFEETKRHNVKP, SVFLYNAVLSKLGRARRTTECWKLFQEMKESGLLP, TSVTYGTVINAACRIGDESLAEKLFAEMENQPNYQP, RVAPYNTMIQFEVQTMFNREKALFYYNRLCATDIEP, SSHTYKLLMDAYGTLKPVNVGSVKAVLELMERTDVPI, DANLFQSQIESLIANDRIVEGIQIVSDMKRYNVSL, NAYIVNALIKGFTKVGMISKARYYFDLLECEGMSGK, and EPSTYENMVRAYLSVNDGRKAMEIVEQLKRKRYPL. Residues 1225-1261 are disordered; it reads NSHMGQKPKRRSLNTSHSSLASLGNASTQHSINSSIN. Residues 1237-1261 show a composition bias toward polar residues; the sequence is LNTSHSSLASLGNASTQHSINSSIN.

Its subcellular location is the mitochondrion. Its function is as follows. Mitochondrial RNA-binding protein that acts as a general negative regulator of mitochondrial translation. The sequence is that of Pentatricopeptide repeat-containing protein 5, mitochondrial (ppr5) from Schizosaccharomyces pombe (strain 972 / ATCC 24843) (Fission yeast).